The sequence spans 1297 residues: Cingulin-like protein 1 (1297 aa).

The segment at 1 to 550 is head; the sequence is MELYFGEYQH…ELTQQTNEET (550 aa). Residues 37–51 carry the ZIM motif; that stretch reads AGSYGVSIRVQGIDG. Residues serine 113, serine 203, and serine 257 each carry the phosphoserine modification. Disordered stretches follow at residues 161-208, 245-306, 364-396, and 428-467; these read NEVN…TSED, GVGE…TPTS, KPGL…AFPF, and QRSV…DGKV. Polar residues predominate over residues 197 to 206; it reads YGSQPNSPTS. The span at 268-283 shows a compositional bias: basic and acidic residues; that stretch reads ETKKNRPDVLPFRRQD. 3 positions are modified to phosphoserine: serine 284, serine 298, and serine 299. The span at 297–306 shows a compositional bias: low complexity; it reads SSSSSTTPTS. Residues 367–378 are compositionally biased toward basic residues; it reads LQRRGRSGKRNR. The span at 379-389 shows a compositional bias: basic and acidic residues; that stretch reads INPDDRKRSRS. A phosphoserine mark is found at serine 389 and serine 392. The residue at position 482 (serine 482) is a Phosphoserine. Positions 586-608 are disordered; the sequence is SRAAGSAQGSNQAPNSPSEGNSL. Over residues 592-608 the composition is skewed to polar residues; that stretch reads AQGSNQAPNSPSEGNSL. Residues 604-1251 are a coiled coil; that stretch reads EGNSLLDQKN…LQGQLNSLKK (648 aa). Phosphoserine is present on residues serine 678 and serine 704. The tail stretch occupies residues 1259-1297; that stretch reads SSKVLDDSDDDDLSSDAGSLYEAPLSYAFPKDSTIASQI.

Belongs to the cingulin family. As to quaternary structure, homodimer or oligomer. Interacts with CD2AP and SH3BP1; probably part of a complex at cell junctions. Widely expressed. Highly expressed in the kidney and lung.

It is found in the cell junction. The protein localises to the tight junction. In terms of biological role, may be involved in anchoring the apical junctional complex, especially tight junctions, to actin-based cytoskeletons. The polypeptide is Cingulin-like protein 1 (Mus musculus (Mouse)).